The following is a 123-amino-acid chain: Large ribosomal subunit protein uL29 (123 aa).

An N6-acetyllysine modification is found at Lys19. Lys25 participates in a covalent cross-link: Glycyl lysine isopeptide (Lys-Gly) (interchain with G-Cter in SUMO2). Phosphoserine is present on Ser29. The residue at position 43 (Lys43) is an N6-acetyllysine. Residues 85–123 (PKKTRAMRRRLNKHEESLKTKKQQRKERLYPLRKYAVKA) form a disordered region. Residues 86–96 (KKTRAMRRRLN) show a composition bias toward basic residues.

Belongs to the universal ribosomal protein uL29 family. In terms of assembly, component of the large ribosomal subunit.

The protein localises to the cytoplasm. Its function is as follows. Component of the large ribosomal subunit. The ribosome is a large ribonucleoprotein complex responsible for the synthesis of proteins in the cell. The polypeptide is Large ribosomal subunit protein uL29 (RPL35) (Oryctolagus cuniculus (Rabbit)).